Here is a 932-residue protein sequence, read N- to C-terminus: Protocadherin gamma-A8 (932 aa).

The first 29 residues, 1 to 29 (MAAPQSRPRRGELILLCALLGTLWEIGRG), serve as a signal peptide directing secretion. 6 consecutive Cadherin domains span residues 30–133 (QIRY…NPKF), 134–242 (QVED…APVF), 243–347 (PHPI…RPEV), 348–452 (IITS…PPTF), 453–562 (PHAS…APEI), and 570–682 (DGST…KPSV). The Extracellular portion of the chain corresponds to 30-692 (QIRYSVPEET…DPNDSSLTLY (663 aa)). An N-linked (GlcNAc...) asparagine glycan is attached at asparagine 47. N-linked (GlcNAc...) asparagine glycans are attached at residues asparagine 414, asparagine 419, and asparagine 545. The N-linked (GlcNAc...) asparagine glycan is linked to asparagine 685. The helical transmembrane segment at 693 to 713 (LVVAVAAISCVFLAFVAVLLG) threads the bilayer. The Cytoplasmic portion of the chain corresponds to 714-932 (LRLRRWHKSR…KKKSGKKEKK (219 aa)). 2 disordered regions span residues 804–841 (ADHG…WPNN) and 902–932 (ATLT…KEKK). Over residues 810-841 (APPNTDWRFSQAQRPGTSGSQNGDDTGTWPNN) the composition is skewed to polar residues. Over residues 922-932 (NKKKSGKKEKK) the composition is skewed to basic residues.

It localises to the cell membrane. Potential calcium-dependent cell-adhesion protein. May be involved in the establishment and maintenance of specific neuronal connections in the brain. The sequence is that of Protocadherin gamma-A8 (PCDHGA8) from Homo sapiens (Human).